Reading from the N-terminus, the 579-residue chain is 3-hydroxy-3-methylglutaryl-coenzyme A reductase (579 aa).

Residues 1 to 22 (MEVRGGVGQGSAARHPPAPEPS) are disordered. 2 helical membrane-spanning segments follow: residues 36-56 (LPIR…LAYL) and 80-100 (AIFG…IAFV). A linker region spans residues 101–153 (QSIVSSGDDDEDFLVGSGSSGSAAAPSRQHAQAPAPCELLGSPAAAPEKMPED). A catalytic region spans residues 154–579 (DEEIVASVVA…EKTRQREVDV (426 aa)). The Charge relay system role is filled by Glu247. Residue Asn311 is glycosylated (N-linked (GlcNAc...) asparagine). Catalysis depends on charge relay system residues Lys379 and Asp455. A helical membrane pass occupies residues 524–544 (LLATVVAGGVLAGELSLLSAL). Catalysis depends on His553, which acts as the Proton donor. The tract at residues 555–579 (KYNRSSKDVSSTTATEKTRQREVDV) is disordered. Asn557 carries an N-linked (GlcNAc...) asparagine glycan. Positions 570 to 579 (EKTRQREVDV) are enriched in basic and acidic residues.

It belongs to the HMG-CoA reductase family.

The protein localises to the endoplasmic reticulum membrane. It carries out the reaction (R)-mevalonate + 2 NADP(+) + CoA = (3S)-3-hydroxy-3-methylglutaryl-CoA + 2 NADPH + 2 H(+). It functions in the pathway metabolic intermediate biosynthesis; (R)-mevalonate biosynthesis; (R)-mevalonate from acetyl-CoA: step 3/3. Its function is as follows. Catalyzes the synthesis of mevalonate. The specific precursor of all isoprenoid compounds present in plants. This Zea mays (Maize) protein is 3-hydroxy-3-methylglutaryl-coenzyme A reductase (HMGR).